A 760-amino-acid chain; its full sequence is Xaa-Pro dipeptidyl-peptidase (760 aa).

Catalysis depends on charge relay system residues Ser-349, Asp-469, and His-499.

The protein belongs to the peptidase S15 family. Homodimer.

Its subcellular location is the cytoplasm. The catalysed reaction is Hydrolyzes Xaa-Pro-|- bonds to release unblocked, N-terminal dipeptides from substrates including Ala-Pro-|-p-nitroanilide and (sequentially) Tyr-Pro-|-Phe-Pro-|-Gly-Pro-|-Ile.. Its function is as follows. Removes N-terminal dipeptides sequentially from polypeptides having unsubstituted N-termini provided that the penultimate residue is proline. This Streptococcus pyogenes serotype M5 (strain Manfredo) protein is Xaa-Pro dipeptidyl-peptidase.